A 282-amino-acid chain; its full sequence is Bifunctional protein FolD (282 aa).

NADP(+) contacts are provided by residues 165-167 (GRS) and serine 190.

The protein belongs to the tetrahydrofolate dehydrogenase/cyclohydrolase family. In terms of assembly, homodimer.

The enzyme catalyses (6R)-5,10-methylene-5,6,7,8-tetrahydrofolate + NADP(+) = (6R)-5,10-methenyltetrahydrofolate + NADPH. It carries out the reaction (6R)-5,10-methenyltetrahydrofolate + H2O = (6R)-10-formyltetrahydrofolate + H(+). Its pathway is one-carbon metabolism; tetrahydrofolate interconversion. Catalyzes the oxidation of 5,10-methylenetetrahydrofolate to 5,10-methenyltetrahydrofolate and then the hydrolysis of 5,10-methenyltetrahydrofolate to 10-formyltetrahydrofolate. The protein is Bifunctional protein FolD of Macrococcus caseolyticus (strain JCSC5402) (Macrococcoides caseolyticum).